Consider the following 377-residue polypeptide: WAT1-related protein At3g56620 (377 aa).

Helical transmembrane passes span 13–33, 40–60, 67–87, 102–122, 142–162, 183–203, 210–230, 235–255, 274–294, and 299–319; these read FAMV…KVVL, YVLV…FALL, PKMT…GPLI, TFAG…SIIC, LVIV…ITFL, VFLL…AATL, LSLS…LTFV, LSAW…AGIM, IFVT…GFLI, and LNLG…TVLW. EamA domains are found at residues 22 to 152 and 190 to 318; these read YAGM…MLMI and FSWA…CTVL.

The protein belongs to the drug/metabolite transporter (DMT) superfamily. Plant drug/metabolite exporter (P-DME) (TC 2.A.7.4) family.

The protein localises to the membrane. This chain is WAT1-related protein At3g56620, found in Arabidopsis thaliana (Mouse-ear cress).